A 322-amino-acid polypeptide reads, in one-letter code: Sulfate adenylyltransferase subunit 2 (322 aa).

It belongs to the PAPS reductase family. CysD subfamily. In terms of assembly, heterodimer composed of CysD, the smaller subunit, and CysN.

The catalysed reaction is sulfate + ATP + H(+) = adenosine 5'-phosphosulfate + diphosphate. Its pathway is sulfur metabolism; hydrogen sulfide biosynthesis; sulfite from sulfate: step 1/3. In terms of biological role, with CysN forms the ATP sulfurylase (ATPS) that catalyzes the adenylation of sulfate producing adenosine 5'-phosphosulfate (APS) and diphosphate, the first enzymatic step in sulfur assimilation pathway. APS synthesis involves the formation of a high-energy phosphoric-sulfuric acid anhydride bond driven by GTP hydrolysis by CysN coupled to ATP hydrolysis by CysD. The sequence is that of Sulfate adenylyltransferase subunit 2 from Bradyrhizobium sp. (strain BTAi1 / ATCC BAA-1182).